Here is a 437-residue protein sequence, read N- to C-terminus: Chaperone SurA (437 aa).

The N-terminal stretch at 1 to 27 is a signal peptide; sequence MHNHVFKTIARHGLIALFFFFSISAMA. PpiC domains lie at 179-280 and 290-388; these read QDEF…KLLN and VDQT…QVLE.

It is found in the periplasm. It catalyses the reaction [protein]-peptidylproline (omega=180) = [protein]-peptidylproline (omega=0). In terms of biological role, chaperone involved in the correct folding and assembly of outer membrane proteins. Recognizes specific patterns of aromatic residues and the orientation of their side chains, which are found more frequently in integral outer membrane proteins. May act in both early periplasmic and late outer membrane-associated steps of protein maturation. This Methylobacillus flagellatus (strain ATCC 51484 / DSM 6875 / VKM B-1610 / KT) protein is Chaperone SurA.